Reading from the N-terminus, the 154-residue chain is MHCPFCGANDTKVIDSRLVAEGEQVRRRRECVACGERFTTFETAELVLPRLIKQDGTRQPFDEEKLRAGMQRALEKRPVSVERLEAALAHIKSRLRATGEREVKSLVVGEMVMAELRKLDEVAYIRFASVYRRFQDLDEFREEIDRLAREPAKE.

A zinc finger spans residues 3 to 34 (CPFCGANDTKVIDSRLVAEGEQVRRRRECVAC). An ATP-cone domain is found at 49–139 (PRLIKQDGTR…VYRRFQDLDE (91 aa)).

Belongs to the NrdR family. Requires Zn(2+) as cofactor.

Functionally, negatively regulates transcription of bacterial ribonucleotide reductase nrd genes and operons by binding to NrdR-boxes. The protein is Transcriptional repressor NrdR of Pseudomonas putida (strain ATCC 700007 / DSM 6899 / JCM 31910 / BCRC 17059 / LMG 24140 / F1).